A 423-amino-acid polypeptide reads, in one-letter code: Glutamyl-tRNA reductase (423 aa).

Substrate contacts are provided by residues 51–54 (TCNR), S99, 104–106 (EDQ), and Q110. The active-site Nucleophile is C52. 179–184 (GSGEMG) serves as a coordination point for NADP(+).

This sequence belongs to the glutamyl-tRNA reductase family. Homodimer.

It carries out the reaction (S)-4-amino-5-oxopentanoate + tRNA(Glu) + NADP(+) = L-glutamyl-tRNA(Glu) + NADPH + H(+). It functions in the pathway porphyrin-containing compound metabolism; protoporphyrin-IX biosynthesis; 5-aminolevulinate from L-glutamyl-tRNA(Glu): step 1/2. Functionally, catalyzes the NADPH-dependent reduction of glutamyl-tRNA(Glu) to glutamate 1-semialdehyde (GSA). The polypeptide is Glutamyl-tRNA reductase (Methanoculleus marisnigri (strain ATCC 35101 / DSM 1498 / JR1)).